The sequence spans 477 residues: Stromelysin-1 (477 aa).

An N-terminal signal peptide occupies residues Met-1 to Ser-17. The propeptide at Tyr-18–Gly-99 is activation peptide. The Cysteine switch signature appears at Pro-90–Val-97. Cys-92 is a binding site for Zn(2+). Ca(2+) is bound by residues Asp-124 and Asp-158. Zn(2+) contacts are provided by His-168 and Asp-170. 4 residues coordinate Ca(2+): Asp-175, Gly-176, Gly-178, and Val-180. His-183 provides a ligand contact to Zn(2+). 3 residues coordinate Ca(2+): Gly-190, Asn-192, and Asp-194. Residue His-196 coordinates Zn(2+). The Ca(2+) site is built by Asp-198, Asp-199, and Glu-201. A Zn(2+)-binding site is contributed by His-218. Glu-219 is a catalytic residue. Zn(2+) contacts are provided by His-222 and His-228. Hemopexin repeat units follow at residues Ser-287–Leu-336, Pro-337–Ala-383, Val-385–Val-433, and Asp-434–Cys-477. The cysteines at positions 290 and 477 are disulfide-linked. Residue Asp-297 participates in Ca(2+) binding. The Ca(2+) site is built by Asp-389 and Asp-438.

The protein belongs to the peptidase M10A family. Ca(2+) serves as cofactor. Zn(2+) is required as a cofactor.

The protein localises to the secreted. The protein resides in the extracellular space. Its subcellular location is the extracellular matrix. The enzyme catalyses Preferential cleavage where P1', P2' and P3' are hydrophobic residues.. Metalloproteinase with a rather broad substrate specificity that can degrade fibronectin, laminin, gelatins of type I, III, IV, and V; collagens III, IV, X, and IX, and cartilage proteoglycans. Activates different molecules including growth factors, plasminogen or other matrix metalloproteinases such as MMP9. Once released into the extracellular matrix (ECM), the inactive pro-enzyme is activated by the plasmin cascade signaling pathway. Also acts intracellularly. For example, in dopaminergic neurons, gets activated by the serine protease HTRA2 upon stress and plays a pivotal role in DA neuronal degeneration by mediating microglial activation and alpha-synuclein/SNCA cleavage. In addition, plays a role in immune response and possesses antiviral activity against various viruses. Mechanistically, translocates from the cytoplasm into the cell nucleus upon virus infection to influence NF-kappa-B activities. This chain is Stromelysin-1 (Mmp3), found in Mus musculus (Mouse).